The chain runs to 147 residues: Hordoindoline-B1 (147 aa).

A signal peptide spans 1–19 (MKTLFLLAILALVASTTFA). The propeptide occupies 20 to 28 (QYSVGGGYN).

Post-translationally, five disulfide bonds are present. In terms of tissue distribution, found in endosperm and aleurone layer of developing kernels, but not in the embryo.

It localises to the membrane. The protein resides in the secreted. It is found in the extracellular space. Functionally, acts as a membranotoxin, probably through its antibacterial and antifungal activities, contributing to the defense mechanism of the plant against predators. Forms monovalent cation-selective ion channels in membranes. Contributes to grain texture and hardness. This chain is Hordoindoline-B1 (HINB-1), found in Hordeum vulgare (Barley).